Reading from the N-terminus, the 308-residue chain is tRNA dimethylallyltransferase (308 aa).

14-21 provides a ligand contact to ATP; it reads GPTASGKS. 16–21 provides a ligand contact to substrate; the sequence is TASGKS. An interaction with substrate tRNA region spans residues 39 to 42; the sequence is DSMQ.

The protein belongs to the IPP transferase family. In terms of assembly, monomer. Requires Mg(2+) as cofactor.

It catalyses the reaction adenosine(37) in tRNA + dimethylallyl diphosphate = N(6)-dimethylallyladenosine(37) in tRNA + diphosphate. Its function is as follows. Catalyzes the transfer of a dimethylallyl group onto the adenine at position 37 in tRNAs that read codons beginning with uridine, leading to the formation of N6-(dimethylallyl)adenosine (i(6)A). This chain is tRNA dimethylallyltransferase, found in Bradyrhizobium sp. (strain ORS 278).